The primary structure comprises 157 residues: Urease accessory protein UreE (157 aa).

This sequence belongs to the UreE family.

It localises to the cytoplasm. Its function is as follows. Involved in urease metallocenter assembly. Binds nickel. Probably functions as a nickel donor during metallocenter assembly. In Paenarthrobacter aurescens (strain TC1), this protein is Urease accessory protein UreE.